Consider the following 719-residue polypeptide: Fatty acid oxidation complex subunit alpha (719 aa).

An enoyl-CoA hydratase/isomerase region spans residues 1–190 (MVYQGNRITV…KLGLVDATVA (190 aa)). Substrate is bound at residue aspartate 298. Positions 313 to 719 (HEINEAAVLG…AAGETFYATA (407 aa)) are 3-hydroxyacyl-CoA dehydrogenase. NAD(+) contacts are provided by residues methionine 326, aspartate 345, 402 to 404 (VVE), lysine 409, and serine 431. Histidine 452 acts as the For 3-hydroxyacyl-CoA dehydrogenase activity in catalysis. Asparagine 455 provides a ligand contact to NAD(+). Asparagine 502 contributes to the substrate binding site.

This sequence in the N-terminal section; belongs to the enoyl-CoA hydratase/isomerase family. The protein in the C-terminal section; belongs to the 3-hydroxyacyl-CoA dehydrogenase family. As to quaternary structure, heterotetramer of two alpha chains (FadB) and two beta chains (FadA).

It carries out the reaction a (3S)-3-hydroxyacyl-CoA + NAD(+) = a 3-oxoacyl-CoA + NADH + H(+). The enzyme catalyses a (3S)-3-hydroxyacyl-CoA = a (2E)-enoyl-CoA + H2O. The catalysed reaction is a 4-saturated-(3S)-3-hydroxyacyl-CoA = a (3E)-enoyl-CoA + H2O. It catalyses the reaction (3S)-3-hydroxybutanoyl-CoA = (3R)-3-hydroxybutanoyl-CoA. It carries out the reaction a (3Z)-enoyl-CoA = a 4-saturated (2E)-enoyl-CoA. The enzyme catalyses a (3E)-enoyl-CoA = a 4-saturated (2E)-enoyl-CoA. Its pathway is lipid metabolism; fatty acid beta-oxidation. Involved in the aerobic and anaerobic degradation of long-chain fatty acids via beta-oxidation cycle. Catalyzes the formation of 3-oxoacyl-CoA from enoyl-CoA via L-3-hydroxyacyl-CoA. It can also use D-3-hydroxyacyl-CoA and cis-3-enoyl-CoA as substrate. The sequence is that of Fatty acid oxidation complex subunit alpha from Psychrobacter arcticus (strain DSM 17307 / VKM B-2377 / 273-4).